Reading from the N-terminus, the 882-residue chain is Valine--tRNA ligase (882 aa).

The 'HIGH' region signature appears at 48–58 (PNVTGKLHLGH). A 'KMSKS' region motif is present at residues 524 to 528 (KMSKS). An ATP-binding site is contributed by Lys-527. The stretch at 809–882 (LAELLDLDEE…KRLAELKAAR (74 aa)) forms a coiled coil. Residues 844-866 (GFTDRAPEKVVQEERDKQADYEQ) form a disordered region. Residues 845-863 (FTDRAPEKVVQEERDKQAD) are compositionally biased toward basic and acidic residues.

The protein belongs to the class-I aminoacyl-tRNA synthetase family. ValS type 1 subfamily. Monomer.

Its subcellular location is the cytoplasm. The catalysed reaction is tRNA(Val) + L-valine + ATP = L-valyl-tRNA(Val) + AMP + diphosphate. In terms of biological role, catalyzes the attachment of valine to tRNA(Val). As ValRS can inadvertently accommodate and process structurally similar amino acids such as threonine, to avoid such errors, it has a 'posttransfer' editing activity that hydrolyzes mischarged Thr-tRNA(Val) in a tRNA-dependent manner. This Latilactobacillus sakei subsp. sakei (strain 23K) (Lactobacillus sakei subsp. sakei) protein is Valine--tRNA ligase.